The sequence spans 364 residues: Histidinol-phosphate aminotransferase 1 (364 aa).

Lysine 211 bears the N6-(pyridoxal phosphate)lysine mark.

This sequence belongs to the class-II pyridoxal-phosphate-dependent aminotransferase family. Histidinol-phosphate aminotransferase subfamily. Homodimer. Requires pyridoxal 5'-phosphate as cofactor.

It carries out the reaction L-histidinol phosphate + 2-oxoglutarate = 3-(imidazol-4-yl)-2-oxopropyl phosphate + L-glutamate. Its pathway is amino-acid biosynthesis; L-histidine biosynthesis; L-histidine from 5-phospho-alpha-D-ribose 1-diphosphate: step 7/9. In Legionella pneumophila (strain Paris), this protein is Histidinol-phosphate aminotransferase 1.